A 492-amino-acid polypeptide reads, in one-letter code: Variant surface glycoprotein MITAT 1.1 (492 aa).

The signal sequence occupies residues 1 to 32; sequence MATGRAKNTKWARWLSTAGLIIVVTLPATTMA. Intrachain disulfides connect Cys47-Cys177 and Cys155-Cys222. Residues Asn298 and Asn471 are each glycosylated (N-linked (GlcNAc...) asparagine). The GPI-anchor amidated serine moiety is linked to residue Ser475. Positions 476–492 are cleaved as a propeptide — removed in mature form; sequence NSFLIHKAPLLLAFLLF.

The protein localises to the cell membrane. Its function is as follows. VSG forms a coat on the surface of the parasite. The trypanosome evades the immune response of the host by expressing a series of antigenically distinct VSGs from an estimated 1000 VSG genes. The sequence is that of Variant surface glycoprotein MITAT 1.1 from Trypanosoma brucei brucei.